Reading from the N-terminus, the 270-residue chain is Putative phosphoenolpyruvate synthase regulatory protein (270 aa).

Residue 150-157 (GVSRCGKT) participates in ADP binding.

The protein belongs to the pyruvate, phosphate/water dikinase regulatory protein family. PSRP subfamily.

It catalyses the reaction [pyruvate, water dikinase] + ADP = [pyruvate, water dikinase]-phosphate + AMP + H(+). The catalysed reaction is [pyruvate, water dikinase]-phosphate + phosphate + H(+) = [pyruvate, water dikinase] + diphosphate. Functionally, bifunctional serine/threonine kinase and phosphorylase involved in the regulation of the phosphoenolpyruvate synthase (PEPS) by catalyzing its phosphorylation/dephosphorylation. In Shewanella putrefaciens (strain CN-32 / ATCC BAA-453), this protein is Putative phosphoenolpyruvate synthase regulatory protein.